Consider the following 222-residue polypeptide: Cytidylate kinase (222 aa).

An ATP-binding site is contributed by 12 to 20 (GPSGAGKGT).

The protein belongs to the cytidylate kinase family. Type 1 subfamily.

It localises to the cytoplasm. The catalysed reaction is CMP + ATP = CDP + ADP. It carries out the reaction dCMP + ATP = dCDP + ADP. This chain is Cytidylate kinase, found in Methylococcus capsulatus (strain ATCC 33009 / NCIMB 11132 / Bath).